A 441-amino-acid polypeptide reads, in one-letter code: Interferon-related developmental regulator 2 (441 aa).

The segment covering 1–15 (MPRARKGNTPRKGGQ) has biased composition (basic residues). The disordered stretch occupies residues 1–72 (MPRARKGNTP…TVDEQGPQED (72 aa)). Over residues 63–72 (TVDEQGPQED) the composition is skewed to acidic residues.

Belongs to the IFRD family. As to quaternary structure, associates with ribosomes; promoting ribosome inactivation.

Functionally, ribosome-binding protein that acts as an inhibitor of mRNA translation by promoting ribosome inactivation. Associates with the P- and E-sites of the ribosome and inserts a C-terminal helix into the mRNA exit channel to preclude translation. This is Interferon-related developmental regulator 2 from Oryctolagus cuniculus (Rabbit).